The following is a 337-amino-acid chain: Vacuolar protein sorting-associated protein 26B-B (337 aa).

The tract at residues 313 to 337 (RFEGTSHPETRPQHSGAAALEQEHE) is disordered.

This sequence belongs to the VPS26 family. Component of the heterotrimeric retromer cargo-selective complex (CSC) which is believed to associate with variable sorting nexins to form functionally distinct retromer complex variants.

The protein resides in the cytoplasm. The protein localises to the membrane. It localises to the endosome. Its function is as follows. Acts as a component of the retromer cargo-selective complex (CSC). The CSC is believed to be the core functional component of retromer or respective retromer complex variants acting to prevent missorting of selected transmembrane cargo proteins into the lysosomal degradation pathway. Retromer mediates retrograde transport of cargo proteins from endosomes to the trans-Golgi network (TGN). This Xenopus laevis (African clawed frog) protein is Vacuolar protein sorting-associated protein 26B-B (vps26b-b).